Here is a 425-residue protein sequence, read N- to C-terminus: Orexin/Hypocretin receptor type 1 (425 aa).

The Extracellular segment spans residues 1–46 (MEPSATPGPQMGVPTGVGDPSLVPPDYEEEFLSYLWRDYLYPKQYE). The segment at 26–41 (DYEEEFLSYLWRDYLY) is required for response to orexin-A. Residues 47 to 67 (WVLIAAYVAVFLVALVGNTLV) traverse the membrane as a helical segment. Residues 68–82 (CLAVWRNHHMRTVTN) lie on the Cytoplasmic side of the membrane. A helical membrane pass occupies residues 83 to 105 (YFIVNLSLADVLVTAICLPASLL). The Extracellular segment spans residues 106 to 119 (VDITESWLFGHALC). Cys119 and Cys202 are disulfide-bonded. A helical transmembrane segment spans residues 120–140 (KVIPYLQAVSVSVAVLTLSFI). Residues 141 to 160 (ALDRWYAIYHPLLFKSTARR) are Cytoplasmic-facing. The helical transmembrane segment at 161 to 182 (ARGSILGIWAVSPAVMVPQAAV) threads the bilayer. Over 183–213 (MECSSVLPELANRTRLFSVCDERWADDLYPK) the chain is Extracellular. The helical transmembrane segment at 214–235 (IYHSCFFIVTYLAPLGLMAMAY) threads the bilayer. The Cytoplasmic segment spans residues 236-298 (FQIFRKLWGR…QMRARRKTAK (63 aa)). The chain crosses the membrane as a helical span at residues 299-321 (MLMVVLLVFALCYLPISVLNVLK). Over 322-336 (RVFGMFRQTSDREAV) the chain is Extracellular. Residues 337 to 360 (YACFTFSHWLVYANSAANPIIYNF) traverse the membrane as a helical segment. Residues 361-425 (LSGKFREQFK…VLTSVTTVLP (65 aa)) are Cytoplasmic-facing.

This sequence belongs to the G-protein coupled receptor 1 family.

The protein localises to the cell membrane. In terms of biological role, moderately selective excitatory receptor for orexin-A and, with a lower affinity, for orexin-B neuropeptide. Triggers an increase in cytoplasmic Ca(2+) levels in response to orexin-A binding. This is Orexin/Hypocretin receptor type 1 from Sus scrofa (Pig).